Here is a 509-residue protein sequence, read N- to C-terminus: Heat shock 70 kDa protein 14 (509 aa).

The protein belongs to the heat shock protein 70 family. Component of ribosome-associated complex (RAC), a heterodimer composed of Hsp70/DnaK-type chaperone HSPA14 and Hsp40/DnaJ-type chaperone DNAJC2.

The protein resides in the cytoplasm. It localises to the cytosol. Component of the ribosome-associated complex (RAC), a complex involved in folding or maintaining nascent polypeptides in a folding-competent state. In the RAC complex, binds to the nascent polypeptide chain, while DNAJC2 stimulates its ATPase activity. The polypeptide is Heat shock 70 kDa protein 14 (HSPA14) (Homo sapiens (Human)).